A 159-amino-acid polypeptide reads, in one-letter code: Cyclic pyranopterin monophosphate synthase (159 aa).

Substrate is bound by residues 75-77 (LCH) and 113-114 (ME). Asp-128 is an active-site residue.

The protein belongs to the MoaC family. Homohexamer; trimer of dimers.

The enzyme catalyses (8S)-3',8-cyclo-7,8-dihydroguanosine 5'-triphosphate = cyclic pyranopterin phosphate + diphosphate. It functions in the pathway cofactor biosynthesis; molybdopterin biosynthesis. Functionally, catalyzes the conversion of (8S)-3',8-cyclo-7,8-dihydroguanosine 5'-triphosphate to cyclic pyranopterin monophosphate (cPMP). The sequence is that of Cyclic pyranopterin monophosphate synthase from Burkholderia multivorans (strain ATCC 17616 / 249).